The sequence spans 189 residues: Nucleolar protein 16 (189 aa).

Basic residues predominate over residues M1–S33. Residues M1–K34 are disordered.

Belongs to the NOP16 family.

It is found in the nucleus. The protein resides in the nucleolus. The protein is Nucleolar protein 16 of Caenorhabditis elegans.